The sequence spans 39 residues: Putative beta-neurotoxin (39 aa).

The interval 1 to 39 is disordered; the sequence is GGKEGYPLNSSNGCKSGRFAGTNSNENTECKGXDAENGY. Residues 3 to 39 form the LCN-type CS-alpha/beta domain; the sequence is KEGYPLNSSNGCKSGRFAGTNSNENTECKGXDAENGY. A compositionally biased stretch (basic and acidic residues) spans 28-39; that stretch reads TECKGXDAENGY.

The protein belongs to the long (4 C-C) scorpion toxin superfamily. Sodium channel inhibitor family. Beta subfamily. Expressed by the venom gland.

It localises to the secreted. Beta toxins bind voltage-independently at site-4 of sodium channels (Nav) and shift the voltage of activation toward more negative potentials thereby affecting sodium channel activation and promoting spontaneous and repetitive firing. The sequence is that of Putative beta-neurotoxin from Tityus pachyurus (Colombian scorpion).